We begin with the raw amino-acid sequence, 87 residues long: Exendin-4 (87 aa).

The signal sequence occupies residues Met1–Gln23. The propeptide occupies Met24 to Ile45. Position 86 is a serine amide (Ser86).

Belongs to the glucagon family. In terms of tissue distribution, expressed by the venom gland.

It is found in the secreted. Its function is as follows. Venom protein that mimics the incretin hormone glucagon-like peptide 1 (GLP-1). It stimulates insulin synthesis and secretion, protects against beta-cell apoptosis in response to different insults, and promotes beta-cell proliferation It also promotes satiety, reduces food intake, reduces fat deposition, reduces body weight and inhibits gastric emptying. Interacts with GLP-1 receptor (GLP1R). Induces hypotension that is mediated by relaxation of cardiac smooth muscle. This is Exendin-4 from Heloderma suspectum cinctum (Banded Gila monster).